Consider the following 317-residue polypeptide: Epidermal growth factor-like protein (317 aa).

A signal peptide spans 1-23 (MDFKIFLFLTAIFMIVGVTVSTA). The interval 24–33 (TTNPTAPRAY) is may be required for E.coli agglutination activity. EGF-like domains are found at residues 93–128 (HCTPDCPSGCGLGNCTAPNVCTCNKGAGFGPDGKCI), 130–161 (VCPGRCLNGQCYGNFCNCNSGFVLEPNGRYCT), 163–195 (GCTRNCGPGGQCVGNNQCSCLSGFALNSQGTCQ), 208–243 (ACEPLCPKGCVNGECVAPGQCRCKSGYALNSSKVCA), 245–280 (KCSQPCYNGFCSAPNVCTCKEGYIKDATSRNGNRCI), and 282–315 (YCAAGCPNGTCSAPNFCICKQGYIKQSKGSNVCV). 18 disulfide bridges follow: C98-C107, C102-C113, C115-C127, C131-C140, C135-C145, C147-C160, C164-C174, C168-C180, C182-C194, C213-C222, C217-C228, C230-C242, C246-C255, C250-C261, C263-C279, C283-C292, C287-C298, and C300-C314.

The protein localises to the secreted. Its function is as follows. Binds to lipopolysaccharides (LPS) present on the cell walls of Gram-negative bacteria, behaving as a pattern recognition receptor (PRR). Induces bacterial aggregation and enhances their subsequent clearance by the innate immune response. Binds to the inner core oligosaccharides region of rough-type bacterial LPS. Displays activity against the Gram-negative bacterium E.coli. Does not display any activity against the Gram-positive bacterium S.aureus or the fungi C.albicans. The polypeptide is Epidermal growth factor-like protein (Holotrichia diomphalia (Korean black chafer)).